Consider the following 691-residue polypeptide: DNA ligase (691 aa).

NAD(+)-binding positions include 41–45, 90–91, and Glu130; these read DAEYD and SL. Lys132 functions as the N6-AMP-lysine intermediate in the catalytic mechanism. NAD(+) contacts are provided by Arg153, Glu190, Lys307, and Lys331. 4 residues coordinate Zn(2+): Cys425, Cys428, Cys443, and Cys449. The 82-residue stretch at 610 to 691 folds into the BRCT domain; sequence APQGVLAGKT…MHTLLEGHAR (82 aa).

Belongs to the NAD-dependent DNA ligase family. LigA subfamily. It depends on Mg(2+) as a cofactor. Mn(2+) is required as a cofactor.

The enzyme catalyses NAD(+) + (deoxyribonucleotide)n-3'-hydroxyl + 5'-phospho-(deoxyribonucleotide)m = (deoxyribonucleotide)n+m + AMP + beta-nicotinamide D-nucleotide.. Its function is as follows. DNA ligase that catalyzes the formation of phosphodiester linkages between 5'-phosphoryl and 3'-hydroxyl groups in double-stranded DNA using NAD as a coenzyme and as the energy source for the reaction. It is essential for DNA replication and repair of damaged DNA. The protein is DNA ligase of Burkholderia mallei (strain NCTC 10247).